Here is a 181-residue protein sequence, read N- to C-terminus: Probable pyruvoyl-dependent arginine decarboxylase (181 aa).

Ser-43 is subject to Pyruvic acid (Ser).

Belongs to the PdaD family. Pyruvate is required as a cofactor.

It carries out the reaction L-arginine + H(+) = agmatine + CO2. The chain is Probable pyruvoyl-dependent arginine decarboxylase from Chlorobium phaeovibrioides (strain DSM 265 / 1930) (Prosthecochloris vibrioformis (strain DSM 265)).